Here is a 283-residue protein sequence, read N- to C-terminus: NAD kinase (283 aa).

The Proton acceptor role is filled by Asp-67. NAD(+)-binding positions include 67 to 68 (DG), 141 to 142 (ND), Arg-152, Asp-171, 182 to 187 (TAYSLS), and Gln-241.

The protein belongs to the NAD kinase family. Requires a divalent metal cation as cofactor.

Its subcellular location is the cytoplasm. The enzyme catalyses NAD(+) + ATP = ADP + NADP(+) + H(+). In terms of biological role, involved in the regulation of the intracellular balance of NAD and NADP, and is a key enzyme in the biosynthesis of NADP. Catalyzes specifically the phosphorylation on 2'-hydroxyl of the adenosine moiety of NAD to yield NADP. The polypeptide is NAD kinase (Heliobacterium modesticaldum (strain ATCC 51547 / Ice1)).